A 221-amino-acid polypeptide reads, in one-letter code: Octanoyltransferase (221 aa).

The BPL/LPL catalytic domain maps to Glu35–Lys221. Residues Arg80–His87, Ala152–Gly154, and Gly165–Ala167 each bind substrate. Cys183 functions as the Acyl-thioester intermediate in the catalytic mechanism.

The protein belongs to the LipB family.

The protein localises to the cytoplasm. It carries out the reaction octanoyl-[ACP] + L-lysyl-[protein] = N(6)-octanoyl-L-lysyl-[protein] + holo-[ACP] + H(+). It functions in the pathway protein modification; protein lipoylation via endogenous pathway; protein N(6)-(lipoyl)lysine from octanoyl-[acyl-carrier-protein]: step 1/2. In terms of biological role, catalyzes the transfer of endogenously produced octanoic acid from octanoyl-acyl-carrier-protein onto the lipoyl domains of lipoate-dependent enzymes. Lipoyl-ACP can also act as a substrate although octanoyl-ACP is likely to be the physiological substrate. This chain is Octanoyltransferase, found in Bacteroides fragilis (strain ATCC 25285 / DSM 2151 / CCUG 4856 / JCM 11019 / LMG 10263 / NCTC 9343 / Onslow / VPI 2553 / EN-2).